A 433-amino-acid chain; its full sequence is Forkhead box protein A2-B (433 aa).

The segment at residues 147–241 (KPPYSYISLI…ENGCYLRRQK (95 aa)) is a DNA-binding region (fork-head). Residues 247–260 (KKPSLREGGGKKLS) are compositionally biased toward basic and acidic residues. Disordered regions lie at residues 247 to 337 (KKPS…QSHL) and 407 to 433 (SGLE…MNSS). Residues 261–282 (EGASSVGSVGNSSSERSVGNES) are compositionally biased toward low complexity. Basic and acidic residues predominate over residues 292-302 (EQKRSLVDMKS). The span at 315 to 331 (ASQAQHLLSQHHSVLSH) shows a compositional bias: low complexity. The segment covering 407–421 (SGLEPSPISSDTSYY) has biased composition (polar residues).

The protein resides in the nucleus. Functionally, acts as a transcriptional activator during early development, limiting the extent of mesoderm formation in the gastrula. Binds to DNA via the target sequence 5'-GT[AC]AACA-3', with 5'-GTAAACA-3' being the preferred binding site. This is Forkhead box protein A2-B (foxa2-b) from Xenopus laevis (African clawed frog).